Here is a 468-residue protein sequence, read N- to C-terminus: Peroxisome proliferator-activated receptor alpha (468 aa).

A disordered region spans residues 1-20; that stretch reads MVDTESQICPLSPFGDDDLE. Residues 99–173 constitute a DNA-binding region (nuclear receptor); sequence NIECRICGDK…DGMSHNAIRF (75 aa). 2 consecutive NR C4-type zinc fingers follow at residues 102 to 122 and 139 to 161; these read CRIC…CEGC and CDRS…FQKC. An NR LBD domain is found at 239–466; the sequence is FVIHDMETLC…HPLLQEIYRD (228 aa). The tract at residues 304–433 is required for heterodimerization with RXRA; sequence DQVTLLKYGV…PKLLQKMADL (130 aa).

This sequence belongs to the nuclear hormone receptor family. NR1 subfamily. As to quaternary structure, heterodimer; with RXRA. This heterodimerization is required for DNA binding and transactivation activity. Interacts with NCOA3 coactivator. Interacts with CITED2; the interaction stimulates its transcriptional activity. Also interacts with PPARBP in vitro. Interacts with AKAP13, LPIN1, PRDM16 and coactivator NCOA6. Interacts with ASXL1 and ASXL2. Interacts with PER2. Interacts with SIRT1; the interaction seems to be modulated by NAD(+) levels. Interacts with CRY1 and CRY2. In hepatocytes, interacts with PAQR3 and HUWE1; the interactions promote PPARA poylubiquitination and HUWE1-mediated degradation. Ubiquitinated by E3 ubiquitin-protein ligase HUWE1; leading to proteasomal degradation. Post-translationally, phosphorylated.

It localises to the nucleus. Functionally, ligand-activated transcription factor. Key regulator of lipid metabolism. Activated by the endogenous ligand 1-palmitoyl-2-oleoyl-sn-glycerol-3-phosphocholine (16:0/18:1-GPC). Activated by oleylethanolamide, a naturally occurring lipid that regulates satiety. Receptor for peroxisome proliferators such as hypolipidemic drugs and fatty acids. Regulates the peroxisomal beta-oxidation pathway of fatty acids. Functions as a transcription activator for the ACOX1 and P450 genes. Transactivation activity requires heterodimerization with RXRA and is antagonized by NR2C2. May be required for the propagation of clock information to metabolic pathways regulated by PER2. This is Peroxisome proliferator-activated receptor alpha (PPARA) from Phascolarctos cinereus (Koala).